A 497-amino-acid chain; its full sequence is Probable malate:quinone oxidoreductase (497 aa).

Belongs to the MQO family. The cofactor is FAD.

The catalysed reaction is (S)-malate + a quinone = a quinol + oxaloacetate. Its pathway is carbohydrate metabolism; tricarboxylic acid cycle; oxaloacetate from (S)-malate (quinone route): step 1/1. The polypeptide is Probable malate:quinone oxidoreductase (Exiguobacterium sibiricum (strain DSM 17290 / CCUG 55495 / CIP 109462 / JCM 13490 / 255-15)).